We begin with the raw amino-acid sequence, 81 residues long: U12-hexatoxin-Mg1a (81 aa).

Residues Met1–Thr24 form the signal peptide. Residues Glu25 to Arg50 constitute a propeptide that is removed on maturation. 3 cysteine pairs are disulfide-bonded: Cys52–Cys66, Cys59–Cys71, and Cys65–Cys75. Pro78 bears the Proline amide mark.

Expressed by the venom gland.

It localises to the secreted. Blocks voltage-gated sodium channels (Nav). Intracranial injection into mice causes lacrimation, slow breathing and death. Intrathorax injection into crickets causes death. This Macrothele gigas (Japanese funnel web spider) protein is U12-hexatoxin-Mg1a.